A 140-amino-acid polypeptide reads, in one-letter code: MADVPGYLRTCLDMGKIAFLAILVSTGIVLQILACALFNNWWPMLSVIMYVLLPMPLLFFGGSDSTSLFNESDNSWINAAKFLTGASAVGSVAIPSILKHAGLIGWGALALDLSSYVVFLVAILGYICIGDASDNYYSYI.

The Cytoplasmic portion of the chain corresponds to 1–16 (MADVPGYLRTCLDMGK). The helical transmembrane segment at 17–37 (IAFLAILVSTGIVLQILACAL) threads the bilayer. Residues 38–40 (FNN) are Lumenal-facing. Residues 41-61 (WWPMLSVIMYVLLPMPLLFFG) form a helical membrane-spanning segment. Residues 62–75 (GSDSTSLFNESDNS) are Cytoplasmic-facing. A helical membrane pass occupies residues 76-98 (WINAAKFLTGASAVGSVAIPSIL). The Lumenal portion of the chain corresponds to 99–108 (KHAGLIGWGA). The helical transmembrane segment at 109–129 (LALDLSSYVVFLVAILGYICI) threads the bilayer. The Cytoplasmic segment spans residues 130-140 (GDASDNYYSYI).

The protein belongs to the OB-RGRP/VPS55 family.

It localises to the endosome membrane. In terms of biological role, involved in endosomal protein transport. This Arabidopsis thaliana (Mouse-ear cress) protein is Vacuolar protein sorting-associated protein 55 homolog.